A 216-amino-acid chain; its full sequence is uncharacterized protein (216 aa).

The segment covering 182 to 193 has biased composition (polar residues); it reads STSNASVNSDDA. Positions 182–204 are disordered; it reads STSNASVNSDDASTAELGPTSEE.

This is an uncharacterized protein from Caenorhabditis elegans.